We begin with the raw amino-acid sequence, 366 residues long: Prostaglandin F2-alpha receptor (366 aa).

The Extracellular segment spans residues 1–31; it reads MSMNSSKQPVSPAAGLIANTTCQTENRLSVF. N-linked (GlcNAc...) asparagine glycosylation is found at asparagine 4 and asparagine 19. Residues 32-55 form a helical membrane-spanning segment; it reads FSIIFMTVGILSNSLAIAILMKAY. Topologically, residues 56 to 69 are cytoplasmic; it reads QRFRQKSKASFLLL. The chain crosses the membrane as a helical span at residues 70–90; the sequence is ASGLVITDFFGHLINGGIAVF. At 91–109 the chain is on the extracellular side; it reads VYASDKDWIRFDQSNILCS. Residues cysteine 108 and cysteine 186 are joined by a disulfide bond. A helical membrane pass occupies residues 110-131; sequence IFGISMVFSGLCPLFLGSAMAI. The Cytoplasmic portion of the chain corresponds to 132–152; sequence ERCIGVTNPIFHSTKITSKHV. A helical membrane pass occupies residues 153-175; that stretch reads KMILSGVCMFAVFVAVLPILGHR. The Extracellular segment spans residues 176–198; that stretch reads DYQIQASRTWCFYNTEHIEDWED. The helical transmembrane segment at 199–224 threads the bilayer; that stretch reads RFYLLFFSFLGLLALGVSFSCNAVTG. The Cytoplasmic segment spans residues 225 to 250; it reads VTLLRVKFRSQQHRQGRSHHLEMIIQ. A helical transmembrane segment spans residues 251–267; that stretch reads LLAIMCVSCVCWSPFLV. Topologically, residues 268–285 are extracellular; it reads TMANIAINGNNSPVTCET. A helical transmembrane segment spans residues 286–307; sequence TLFALRMATWNQILDPWVYILL. Topologically, residues 308-366 are cytoplasmic; it reads RKAVLRNLYKLASRCCGVNIISLHIWELSSIKNSLKVAAISESPAAEKESQQASSEAGL.

The protein belongs to the G-protein coupled receptor 1 family.

The protein resides in the cell membrane. Functionally, receptor for prostaglandin F2-alpha (PGF2-alpha). The activity of this receptor is mediated by G proteins which activate a phosphatidylinositol-calcium second messenger system. Initiates luteolysis in the corpus luteum. This Mus musculus (Mouse) protein is Prostaglandin F2-alpha receptor (Ptgfr).